Consider the following 296-residue polypeptide: MPELPEVETVRRGLQPVLEGARLTRVEARRPDLRFPFPERFSERLTGKTITALGRRAKYLTMHVQDGPVLICHLGMSGSFRIETDDDGETPGVFHHERSKSTAHDHVVFDVVAADGARSRVIFNDPRRFGFMLFAEGSPETHPMLAGLGVEPTGNTLDGVLLASLLKGRGSPLKAALLDQKLIAGLGNIYVSEALWRAGLSPLREAGTIARPSKKARQQSERLAEAIRSVISDAIAAGGSSLRDYMHTDGSLGYFQHSFAVYDREGEPCPKPGCGGHIERVVQSGRSTFYCRTCQS.

Catalysis depends on Pro2, which acts as the Schiff-base intermediate with DNA. Glu3 (proton donor) is an active-site residue. Lys58 serves as the catalytic Proton donor; for beta-elimination activity. DNA-binding residues include His104, Arg127, and Arg169. The segment at 260 to 296 (AVYDREGEPCPKPGCGGHIERVVQSGRSTFYCRTCQS) adopts an FPG-type zinc-finger fold. Arg286 (proton donor; for delta-elimination activity) is an active-site residue.

This sequence belongs to the FPG family. In terms of assembly, monomer. Zn(2+) is required as a cofactor.

The catalysed reaction is Hydrolysis of DNA containing ring-opened 7-methylguanine residues, releasing 2,6-diamino-4-hydroxy-5-(N-methyl)formamidopyrimidine.. It carries out the reaction 2'-deoxyribonucleotide-(2'-deoxyribose 5'-phosphate)-2'-deoxyribonucleotide-DNA = a 3'-end 2'-deoxyribonucleotide-(2,3-dehydro-2,3-deoxyribose 5'-phosphate)-DNA + a 5'-end 5'-phospho-2'-deoxyribonucleoside-DNA + H(+). Its function is as follows. Involved in base excision repair of DNA damaged by oxidation or by mutagenic agents. Acts as a DNA glycosylase that recognizes and removes damaged bases. Has a preference for oxidized purines, such as 7,8-dihydro-8-oxoguanine (8-oxoG). Has AP (apurinic/apyrimidinic) lyase activity and introduces nicks in the DNA strand. Cleaves the DNA backbone by beta-delta elimination to generate a single-strand break at the site of the removed base with both 3'- and 5'-phosphates. This chain is Formamidopyrimidine-DNA glycosylase (mutM), found in Mesorhizobium japonicum (strain LMG 29417 / CECT 9101 / MAFF 303099) (Mesorhizobium loti (strain MAFF 303099)).